The following is an 808-amino-acid chain: Dynamin-related protein 3A (808 aa).

The disordered stretch occupies residues 1 to 31; that stretch reads MTIEEVSGETPPSTPPSSSTPSPSSSTTNAA. Residues 16 to 28 are compositionally biased toward low complexity; it reads PSSSTPSPSSSTT. The 275-residue stretch at 56–330 folds into the Dynamin-type G domain; it reads TIALPQVVVV…LVQHIKVLLP (275 aa). Residues 66-73 form a G1 motif region; the sequence is GSQSSGKS. GTP is bound at residue 66–73; it reads GSQSSGKS. Positions 92–94 are G2 motif; that stretch reads CTR. The G3 motif stretch occupies residues 172–175; the sequence is DLPG. GTP contacts are provided by residues 172–176 and 241–244; these read DLPGI and TKLD. The interval 241–244 is G4 motif; sequence TKLD. Positions 271-274 are G5 motif; sequence VNRC. Positions 548–578 are disordered; it reads IPHPVARPKDTVEPDRTSSSTSQVKSRSFLG. Basic and acidic residues predominate over residues 554–563; that stretch reads RPKDTVEPDR. Residues 564–575 are compositionally biased toward low complexity; it reads TSSSTSQVKSRS. The GED domain occupies 670 to 761; it reads IQITKLLLRS…TLDELPLEAD (92 aa). The segment at 774 to 808 is disordered; sequence LTSSKYSTSSSYSASPSTTRRSRRAGDQHQNGYGF. The span at 775-792 shows a compositional bias: low complexity; it reads TSSKYSTSSSYSASPSTT.

It belongs to the TRAFAC class dynamin-like GTPase superfamily. Dynamin/Fzo/YdjA family. In terms of assembly, homooligomer. Interacts with ARC5 on peroxisomes and ELM1 on mitochondria. Ubiquitous. Preferentially expressed in flowers.

It localises to the mitochondrion. Its subcellular location is the peroxisome. Functionally, involved in the control of mitochondrial and peroxisomal division and morphology. In association with PEX11C, PEX11D, PEX11E and FIS1B, is involved in cell cycle-associated constitutive self-replication of preexisting peroxisomes. This chain is Dynamin-related protein 3A (DRP3A), found in Arabidopsis thaliana (Mouse-ear cress).